The sequence spans 229 residues: Peroxiredoxin-like 2A (229 aa).

The thioredoxin fold stretch occupies residues 14–112; the sequence is MWSIGAGALG…DQLGVPLYAV (99 aa). Catalysis depends on redox-active residues Cys85 and Cys88.

The protein belongs to the peroxiredoxin-like PRXL2 family. PRXL2A subfamily. Expressed in CSF1 and TNFSF11-stimulated CD14(+) peripheral blood mononuclear cells (PBMCs).

It is found in the cytoplasm. It localises to the secreted. Its function is as follows. Involved in redox regulation of the cell. Acts as an antioxidant. Inhibits TNFSF11-induced NFKB1 and JUN activation and osteoclast differentiation. May affect bone resorption and help to maintain bone mass. Acts as a negative regulator of macrophage-mediated inflammation by inhibiting macrophage production of inflammatory cytokines, probably through suppression of the MAPK signaling pathway. This chain is Peroxiredoxin-like 2A, found in Homo sapiens (Human).